The primary structure comprises 195 residues: BAG family molecular chaperone regulator 1A (195 aa).

The Ubiquitin-like domain maps to S6 to I72. The disordered stretch occupies residues H78–A98. The segment covering G83 to A98 has biased composition (basic and acidic residues). Residues E109 to S190 form the BAG domain.

As to quaternary structure, binds to the ATPase domain of HSP70/HSC chaperones.

In terms of biological role, inhibits the chaperone activity of HSP70/HSC70 by promoting substrate release. The sequence is that of BAG family molecular chaperone regulator 1A (bag101) from Schizosaccharomyces pombe (strain 972 / ATCC 24843) (Fission yeast).